The sequence spans 40 residues: Protein YneP (40 aa).

This is Protein YneP from Escherichia coli (strain K12).